The sequence spans 199 residues: Ribonuclease P protein subunit p25 (199 aa).

Residues 1–11 (MENFRKVRSEE) are compositionally biased toward basic and acidic residues. Disordered stretches follow at residues 1-31 (MENF…FADL) and 146-199 (PRQL…DRTA). Serine 172 bears the Phosphoserine mark. The segment covering 190–199 (PEAENEDRTA) has biased composition (acidic residues).

Belongs to the histone-like Alba family. As to quaternary structure, component of nuclear RNase P and RNase MRP ribonucleoproteins. RNase P consists of a catalytic RNA moiety and 10 different protein chains; POP1, POP4, POP5, POP7, RPP14, RPP21, RPP25, RPP30, RPP38 and RPP40. Within the RNase P complex, POP1, POP7 and RPP25 form the 'finger' subcomplex, POP5, RPP14, RPP40 and homodimeric RPP30 form the 'palm' subcomplex, and RPP21, POP4 and RPP38 form the 'wrist' subcomplex. All subunits of the RNase P complex interact with the catalytic RNA. Several subunits of RNase P are also part of the RNase MRP complex. RNase MRP consists of a catalytic RNA moiety and about 8 protein subunits; POP1, POP7, RPP25, RPP30, RPP38, RPP40 and possibly also POP4 and POP5. POP7 forms a heterodimer with RPP25 that binds to the P3 stem loop of the catalytic RNA.

The protein localises to the nucleus. The protein resides in the nucleolus. Component of ribonuclease P, a ribonucleoprotein complex that generates mature tRNA molecules by cleaving their 5'-ends. Also a component of the MRP ribonuclease complex, which cleaves pre-rRNA sequences. The protein is Ribonuclease P protein subunit p25 (Rpp25) of Mus musculus (Mouse).